Consider the following 499-residue polypeptide: MIKRALISVFDKTGILDLAKFLESRDVEIISTGGTYKHLKENGVKVIDIEEVTGFPEMLDGRVKTLNPLIHGGILAIRDNEEHMKVIEEKGINPIDMVVVNLYPFFNKVEENLSFDEKVEFIDIGGPTMIRAAAKNFKDVVVLTDTKDYENVIDEIKENDQVNIKTRKKLAGKVFNLMSAYDAAISNFLLEEEYPEYLTLSYKKNMDLRYGENPHQTAAYYTSTVGKYPMKNFEKLNGKELSYNNIKDMDIAWKTVCEFEEVACCALKHNTPCGVAIGDTVQEVYTKAYECDPISIFGGIVAFNRKVDKETAENLAKIFLEIVVAPDFDEDALEVLKNKKNLRVIKCEEKSTEGKDMAKVDGGILVQKSDNKLLEDTKVVTEKSPTEQEMKDLIFGMKVVKYVKSNAIVVVKDGMAKGIGGGQVNRIWAAKEALDRAGDGIVLASDAFFPFGDVAEEAAKWGIKAIIQPGGSIRDEESIKVCDEKGISMVFTGIRHFKH.

In terms of domain architecture, MGS-like spans 1-144 (MIKRALISVF…KNFKDVVVLT (144 aa)).

Belongs to the PurH family.

The enzyme catalyses (6R)-10-formyltetrahydrofolate + 5-amino-1-(5-phospho-beta-D-ribosyl)imidazole-4-carboxamide = 5-formamido-1-(5-phospho-D-ribosyl)imidazole-4-carboxamide + (6S)-5,6,7,8-tetrahydrofolate. The catalysed reaction is IMP + H2O = 5-formamido-1-(5-phospho-D-ribosyl)imidazole-4-carboxamide. Its pathway is purine metabolism; IMP biosynthesis via de novo pathway; 5-formamido-1-(5-phospho-D-ribosyl)imidazole-4-carboxamide from 5-amino-1-(5-phospho-D-ribosyl)imidazole-4-carboxamide (10-formyl THF route): step 1/1. It functions in the pathway purine metabolism; IMP biosynthesis via de novo pathway; IMP from 5-formamido-1-(5-phospho-D-ribosyl)imidazole-4-carboxamide: step 1/1. This chain is Bifunctional purine biosynthesis protein PurH, found in Clostridium botulinum (strain Okra / Type B1).